The chain runs to 62 residues: uncharacterized protein (62 aa).

This is an uncharacterized protein from Schizosaccharomyces pombe (strain 972 / ATCC 24843) (Fission yeast).